Reading from the N-terminus, the 338-residue chain is Glycerol-3-phosphate dehydrogenase [NAD(P)+] (338 aa).

NADPH contacts are provided by Trp11, Arg30, and Lys109. Positions 109, 143, and 145 each coordinate sn-glycerol 3-phosphate. Ala147 contributes to the NADPH binding site. Positions 198, 251, 261, 262, and 263 each coordinate sn-glycerol 3-phosphate. Catalysis depends on Lys198, which acts as the Proton acceptor. Arg262 contributes to the NADPH binding site. NADPH-binding residues include Val286 and Glu288.

The protein belongs to the NAD-dependent glycerol-3-phosphate dehydrogenase family.

The protein resides in the cytoplasm. The enzyme catalyses sn-glycerol 3-phosphate + NAD(+) = dihydroxyacetone phosphate + NADH + H(+). It carries out the reaction sn-glycerol 3-phosphate + NADP(+) = dihydroxyacetone phosphate + NADPH + H(+). It participates in membrane lipid metabolism; glycerophospholipid metabolism. Functionally, catalyzes the reduction of the glycolytic intermediate dihydroxyacetone phosphate (DHAP) to sn-glycerol 3-phosphate (G3P), the key precursor for phospholipid synthesis. This Cupriavidus taiwanensis (strain DSM 17343 / BCRC 17206 / CCUG 44338 / CIP 107171 / LMG 19424 / R1) (Ralstonia taiwanensis (strain LMG 19424)) protein is Glycerol-3-phosphate dehydrogenase [NAD(P)+].